The sequence spans 856 residues: Inactive rhomboid protein 1 (856 aa).

The disordered stretch occupies residues M1–L20. Residues M1–T412 are Cytoplasmic-facing. Phosphoserine is present on residues S76 and S176. Phosphothreonine occurs at positions 180 and 183. S391 carries the post-translational modification Phosphoserine. Residues F413–F433 form a helical membrane-spanning segment. The Lumenal segment spans residues S434 to R656. A glycan (N-linked (GlcNAc...) asparagine) is linked at N584. Residues L657–Q677 traverse the membrane as a helical segment. Over M678–R692 the chain is Cytoplasmic. Residues I693–P713 traverse the membrane as a helical segment. The Lumenal portion of the chain corresponds to Y714 to R715. The helical transmembrane segment at A716–F736 threads the bilayer. The Cytoplasmic portion of the chain corresponds to Q737 to R747. A helical membrane pass occupies residues A748–I768. Residues D769 to H773 lie on the Lumenal side of the membrane. Residues I774–G794 traverse the membrane as a helical segment. Over K795–Q804 the chain is Cytoplasmic. A helical membrane pass occupies residues I805–F825. At Y826 to H856 the chain is on the lumenal side.

It belongs to the peptidase S54 family. Homodimer, or homooligomer. Interacts with TGFA and HBEGF. Interacts with EGF; may retain EGF in the endoplasmic reticulum and regulates its degradation through the endoplasmic reticulum-associated degradation (ERAD). Interacts (via cytoplasmic N-terminus) with FRMD8/iTAP; this interaction leads to mutual protein stabilization. Interacts with ADAM17/TACE.

It is found in the endoplasmic reticulum membrane. The protein localises to the golgi apparatus membrane. Functionally, regulates ADAM17 protease, a sheddase of the epidermal growth factor (EGF) receptor ligands and TNF, thereby plays a role in sleep, cell survival, proliferation, migration and inflammation. Does not exhibit any protease activity on its own. The polypeptide is Inactive rhomboid protein 1 (Rhbdf1) (Rattus norvegicus (Rat)).